The primary structure comprises 450 residues: Tubulin beta-6 chain (450 aa).

GTP-binding residues include Gln-11, Glu-71, Ser-140, Gly-144, Thr-145, Gly-146, Asn-206, and Asn-228. Glu-71 lines the Mg(2+) pocket. Residues 429–450 form a disordered region; the sequence is DATVEDEEEYEGEEGLDENYET. Over residues 431–450 the composition is skewed to acidic residues; it reads TVEDEEEYEGEEGLDENYET.

Belongs to the tubulin family. Dimer of alpha and beta chains. A typical microtubule is a hollow water-filled tube with an outer diameter of 25 nm and an inner diameter of 15 nM. Alpha-beta heterodimers associate head-to-tail to form protofilaments running lengthwise along the microtubule wall with the beta-tubulin subunit facing the microtubule plus end conferring a structural polarity. Microtubules usually have 13 protofilaments but different protofilament numbers can be found in some organisms and specialized cells. Requires Mg(2+) as cofactor.

It is found in the cytoplasm. Its subcellular location is the cytoskeleton. Tubulin is the major constituent of microtubules, a cylinder consisting of laterally associated linear protofilaments composed of alpha- and beta-tubulin heterodimers. Microtubules grow by the addition of GTP-tubulin dimers to the microtubule end, where a stabilizing cap forms. Below the cap, tubulin dimers are in GDP-bound state, owing to GTPase activity of alpha-tubulin. The sequence is that of Tubulin beta-6 chain from Gossypium hirsutum (Upland cotton).